The sequence spans 148 residues: FAD synthase (148 aa).

ATP contacts are provided by residues 14 to 15 (VF), 19 to 22 (HVGH), and D100.

It belongs to the archaeal FAD synthase family. As to quaternary structure, homodimer. It depends on a divalent metal cation as a cofactor.

The enzyme catalyses FMN + ATP + H(+) = FAD + diphosphate. The protein operates within cofactor biosynthesis; FAD biosynthesis; FAD from FMN: step 1/1. In terms of biological role, catalyzes the transfer of the AMP portion of ATP to flavin mononucleotide (FMN) to produce flavin adenine dinucleotide (FAD) coenzyme. The chain is FAD synthase from Thermococcus sibiricus (strain DSM 12597 / MM 739).